Consider the following 41-residue polypeptide: U-AITX-Bg1a (41 aa).

3 cysteine pairs are disulfide-bonded: Cys2/Cys35, Cys4/Cys28, and Cys18/Cys36.

The protein belongs to the sea anemone type 3 (BDS) potassium channel toxin family.

It localises to the secreted. The protein localises to the nematocyst. Its function is as follows. Potently and selectively inhibits voltage-gated potassium channels Kv11/KCNH/ERG. Acts as a gating-modifier toxin that shifts the voltage-dependence of ERG activation in the positive direction and suppresses its current amplitudes elicited by strong depolarizing pulses that maximally activate the channels. This is U-AITX-Bg1a from Bunodosoma granuliferum (Red warty sea anemone).